We begin with the raw amino-acid sequence, 370 residues long: MKAGRYIGVMSGTSLDGVDVVLAAISNKLVAQQANHFLPYPQTLRQRILAVCQGQPVTLHELGLLDAQLGELYAKAIMELLAKARLSAADITAIGCHGQTIWHEPESDIPFTMQIGDNNRVAALTGITTVGDFRRRDMAYGGQGAPLVPAFHLAVLGHPTEKRIVLNIGGIANISLLLPGVAVKGYDTGPGNMLLDSWNWVHNQTAYDDNGQWAATGNVNTQLLQEMLADPYFSRSAPKSTGREYFNTQWLHYHLAKVPNVFPEDVQATLVELTAISIAQQVQLNGGCERLLVCGGGAKNGQIMHRLASLLPGTEVSLTDKYGLSGDDMEALAFAWLAARTMANEPGNLPSVTGASRETILGAIYPTNPR.

An ATP-binding site is contributed by 12-19; it reads GTSLDGVD.

Belongs to the anhydro-N-acetylmuramic acid kinase family.

It carries out the reaction 1,6-anhydro-N-acetyl-beta-muramate + ATP + H2O = N-acetyl-D-muramate 6-phosphate + ADP + H(+). It functions in the pathway amino-sugar metabolism; 1,6-anhydro-N-acetylmuramate degradation. It participates in cell wall biogenesis; peptidoglycan recycling. Catalyzes the specific phosphorylation of 1,6-anhydro-N-acetylmuramic acid (anhMurNAc) with the simultaneous cleavage of the 1,6-anhydro ring, generating MurNAc-6-P. Is required for the utilization of anhMurNAc either imported from the medium or derived from its own cell wall murein, and thus plays a role in cell wall recycling. The chain is Anhydro-N-acetylmuramic acid kinase from Proteus mirabilis (strain HI4320).